Consider the following 288-residue polypeptide: Lipoyl synthase (288 aa).

Residues Cys39, Cys44, Cys50, Cys65, Cys69, Cys72, and Ser276 each coordinate [4Fe-4S] cluster. One can recognise a Radical SAM core domain in the interval 51–265; the sequence is WGKGTATFMI…KETGLKKGFE (215 aa).

It belongs to the radical SAM superfamily. Lipoyl synthase family. The cofactor is [4Fe-4S] cluster.

It is found in the cytoplasm. The enzyme catalyses [[Fe-S] cluster scaffold protein carrying a second [4Fe-4S](2+) cluster] + N(6)-octanoyl-L-lysyl-[protein] + 2 oxidized [2Fe-2S]-[ferredoxin] + 2 S-adenosyl-L-methionine + 4 H(+) = [[Fe-S] cluster scaffold protein] + N(6)-[(R)-dihydrolipoyl]-L-lysyl-[protein] + 4 Fe(3+) + 2 hydrogen sulfide + 2 5'-deoxyadenosine + 2 L-methionine + 2 reduced [2Fe-2S]-[ferredoxin]. It functions in the pathway protein modification; protein lipoylation via endogenous pathway; protein N(6)-(lipoyl)lysine from octanoyl-[acyl-carrier-protein]: step 2/2. Its function is as follows. Catalyzes the radical-mediated insertion of two sulfur atoms into the C-6 and C-8 positions of the octanoyl moiety bound to the lipoyl domains of lipoate-dependent enzymes, thereby converting the octanoylated domains into lipoylated derivatives. The polypeptide is Lipoyl synthase (Bacteroides fragilis (strain YCH46)).